The following is a 510-amino-acid chain: 2,3-bisphosphoglycerate-independent phosphoglycerate mutase (510 aa).

Positions 14 and 64 each coordinate Mn(2+). Residue S64 is the Phosphoserine intermediate of the active site. Substrate contacts are provided by residues H125, 155 to 156 (RD), R187, R193, 259 to 262 (RADR), and K332. D399, H403, D440, H441, and H459 together coordinate Mn(2+).

This sequence belongs to the BPG-independent phosphoglycerate mutase family. Monomer. Requires Mn(2+) as cofactor.

It carries out the reaction (2R)-2-phosphoglycerate = (2R)-3-phosphoglycerate. Its pathway is carbohydrate degradation; glycolysis; pyruvate from D-glyceraldehyde 3-phosphate: step 3/5. Catalyzes the interconversion of 2-phosphoglycerate and 3-phosphoglycerate. This is 2,3-bisphosphoglycerate-independent phosphoglycerate mutase from Pseudomonas syringae pv. syringae (strain B728a).